The chain runs to 162 residues: Retinoic acid receptor responder protein 2 (162 aa).

A signal peptide spans Met1–Thr20. Disulfide bonds link Cys79-Cys89, Cys100-Cys119, and Cys103-Cys134. Residues Arg157 to Lys162 constitute a propeptide that is removed on maturation.

Secreted in an inactive precursor form, prochemerin, which is proteolytically processed by a variety of extracellular proteases to generate forms with differing levels of bioactivity. For example, the removal of six amino acids results in chemerin-156, which exhibits the highest activity, while removal of seven amino acids results in chemerin-155 which has slightly less activity. Some proteases are able to cleave at more than one site and chemerin forms may be sequentially processed by different enzymes to modulate activity levels. The coordinated expression and activity of chemerin-modifying enzymes is essential for regulating its bioactivation, inactivation and, consequently, biological function. Cathepsin G cleaves seven C-terminal amino acids from prochemerin (chemerin-155), elastase is able to cleave six (chemerin-156), eight (chemerin-154) or eleven (chemerin-151), plasmin cleaves five amino acids (chemerin-157), and tryptase cleaves five (chemerin-157) or eight (chemerin-154). Multiple cleavages might be required to fully activate chemerin, with an initial tryptase cleavage resulting in chemerin with low activity (chemerin-157), and a second cleavage by carboxypeptidase N or B producing highly active chemerin (chemerin-156). As to expression, expressed in the differentiated adipocytes (at protein level). Abundantly expressed in the liver, adipose tissue including visceral, epididymal, and brown adipose tissue.

The protein localises to the secreted. Functionally, adipocyte-secreted protein (adipokine) that regulates adipogenesis, metabolism and inflammation through activation of the chemokine-like receptor 1 (CMKLR1). Also acts as a ligand for CMKLR2. Can also bind to C-C chemokine receptor-like 2 (CCRL2), but with a lower affinity than it does to CMKLR1 or CMKLR2. Positively regulates adipocyte differentiation, modulates the expression of adipocyte genes involved in lipid and glucose metabolism and might play a role in angiogenesis, a process essential for the expansion of white adipose tissue. Also acts as a pro-inflammatory adipokine, causing an increase in secretion of pro-inflammatory and prodiabetic adipokines, which further impair adipose tissue metabolic function and have negative systemic effects including impaired insulin sensitivity, altered glucose and lipid metabolism, and a decrease in vascular function in other tissues. Can have both pro- and anti-inflammatory properties depending on the modality of enzymatic cleavage by different classes of proteases. Acts as a chemotactic factor for leukocyte populations expressing CMKLR1, particularly immature plasmacytoid dendritic cells, but also immature myeloid DCs, macrophages and natural killer cells. Exerts an anti-inflammatory role by preventing TNF/TNFA-induced VCAM1 expression and monocytes adhesion in vascular endothelial cells. The effect is mediated via inhibiting activation of NF-kappa-B and CRK/p38 through stimulation of AKT1/NOS3 signaling and nitric oxide production. Exhibits an antimicrobial function in the skin. In Mus musculus (Mouse), this protein is Retinoic acid receptor responder protein 2 (Rarres2).